Reading from the N-terminus, the 545-residue chain is Chaperonin GroEL 5 (545 aa).

ATP-binding positions include 30–33 (TLGP), K51, 87–91 (DGTTT), G415, and D495.

It belongs to the chaperonin (HSP60) family. As to quaternary structure, forms a cylinder of 14 subunits composed of two heptameric rings stacked back-to-back. Interacts with the co-chaperonin GroES.

Its subcellular location is the cytoplasm. The enzyme catalyses ATP + H2O + a folded polypeptide = ADP + phosphate + an unfolded polypeptide.. Functionally, together with its co-chaperonin GroES, plays an essential role in assisting protein folding. The GroEL-GroES system forms a nano-cage that allows encapsulation of the non-native substrate proteins and provides a physical environment optimized to promote and accelerate protein folding. This chain is Chaperonin GroEL 5, found in Sinorhizobium medicae (strain WSM419) (Ensifer medicae).